The sequence spans 466 residues: Fez family zinc finger protein 1 (466 aa).

An Engrailed homology 1 repressor motif is present at residues 34 to 49; it reads PLAFSIERIMSRTPEP. C2H2-type zinc fingers lie at residues 261–283, 289–311, 317–339, 345–367, 373–395, and 401–424; these read FTCE…MPVH, FVCK…KIIH, HKCN…TRIH, FVCE…KLTH, FKCN…MHTH, and FTCP…RKLH. The tract at residues 446 to 466 is disordered; the sequence is LPNREQSHTIIQSPQLQKSVY. Residues 453-466 show a composition bias toward polar residues; that stretch reads HTIIQSPQLQKSVY.

The protein belongs to the krueppel C2H2-type zinc-finger protein family.

Its subcellular location is the nucleus. Functionally, transcription repressor. Involved in the development of the forebrain region. The protein is Fez family zinc finger protein 1 (fezf1) of Xenopus laevis (African clawed frog).